Here is a 224-residue protein sequence, read N- to C-terminus: LexA repressor (224 aa).

Positions 41–61 form a DNA-binding region, H-T-H motif; sequence MREIGDAVGLSSLSSVTHQLN. Active-site for autocatalytic cleavage activity residues include S148 and K185.

This sequence belongs to the peptidase S24 family. In terms of assembly, homodimer.

It catalyses the reaction Hydrolysis of Ala-|-Gly bond in repressor LexA.. Its function is as follows. Represses a number of genes involved in the response to DNA damage (SOS response), including recA and lexA. In the presence of single-stranded DNA, RecA interacts with LexA causing an autocatalytic cleavage which disrupts the DNA-binding part of LexA, leading to derepression of the SOS regulon and eventually DNA repair. This chain is LexA repressor, found in Leifsonia xyli subsp. xyli (strain CTCB07).